Consider the following 151-residue polypeptide: Transcription antitermination protein NusB (151 aa).

Belongs to the NusB family.

In terms of biological role, involved in transcription antitermination. Required for transcription of ribosomal RNA (rRNA) genes. Binds specifically to the boxA antiterminator sequence of the ribosomal RNA (rrn) operons. This is Transcription antitermination protein NusB from Photobacterium profundum (strain SS9).